We begin with the raw amino-acid sequence, 160 residues long: Transcriptional repressor NrdR (160 aa).

A zinc finger spans residues 3–34; that stretch reads CPYCQYEDTQVKDSRPSEEGTVIRRRRICSVC. Residues 49-139 form the ATP-cone domain; the sequence is LLVLKKSGRY…VYRDFRNASD (91 aa).

The protein belongs to the NrdR family. It depends on Zn(2+) as a cofactor.

Its function is as follows. Negatively regulates transcription of bacterial ribonucleotide reductase nrd genes and operons by binding to NrdR-boxes. The polypeptide is Transcriptional repressor NrdR (Bartonella henselae (strain ATCC 49882 / DSM 28221 / CCUG 30454 / Houston 1) (Rochalimaea henselae)).